The following is a 289-amino-acid chain: ATP synthase gamma chain (289 aa).

The protein belongs to the ATPase gamma chain family. As to quaternary structure, F-type ATPases have 2 components, CF(1) - the catalytic core - and CF(0) - the membrane proton channel. CF(1) has five subunits: alpha(3), beta(3), gamma(1), delta(1), epsilon(1). CF(0) has three main subunits: a, b and c.

It localises to the cell membrane. Its function is as follows. Produces ATP from ADP in the presence of a proton gradient across the membrane. The gamma chain is believed to be important in regulating ATPase activity and the flow of protons through the CF(0) complex. The polypeptide is ATP synthase gamma chain (Buchnera aphidicola subsp. Melaphis rhois).